Reading from the N-terminus, the 498-residue chain is Pyridine nucleotide-disulfide oxidoreductase domain-containing protein 1 (498 aa).

The residue at position 1 (Met1) is an N-acetylmethionine.

It belongs to the class-I pyridine nucleotide-disulfide oxidoreductase family. PYROXD1 subfamily. It depends on FAD as a cofactor.

Its subcellular location is the nucleus. The protein localises to the cytoplasm. The protein resides in the myofibril. It is found in the sarcomere. Functionally, probable FAD-dependent oxidoreductase; involved in the cellular oxidative stress response. Required for normal sarcomere structure and muscle fiber integrity. In Mus musculus (Mouse), this protein is Pyridine nucleotide-disulfide oxidoreductase domain-containing protein 1 (Pyroxd1).